Here is a 505-residue protein sequence, read N- to C-terminus: GMP synthase [glutamine-hydrolyzing] (505 aa).

Residues 2–190 enclose the Glutamine amidotransferase type-1 domain; that stretch reads SVVILDFGSQ…FLEICGVARD (189 aa). The Nucleophile role is filled by Cys79. Residues His165 and Glu167 contribute to the active site. The 190-residue stretch at 191-380 folds into the GMPS ATP-PPase domain; the sequence is WNAEHIVDEL…LGLPDAIRMR (190 aa). 218–224 contacts ATP; sequence SGGVDSS.

In terms of assembly, homodimer.

The catalysed reaction is XMP + L-glutamine + ATP + H2O = GMP + L-glutamate + AMP + diphosphate + 2 H(+). It functions in the pathway purine metabolism; GMP biosynthesis; GMP from XMP (L-Gln route): step 1/1. In terms of biological role, catalyzes the synthesis of GMP from XMP. The protein is GMP synthase [glutamine-hydrolyzing] of Deinococcus geothermalis (strain DSM 11300 / CIP 105573 / AG-3a).